The sequence spans 315 residues: tRNA pseudouridine synthase B (315 aa).

H42 is a substrate binding site. Catalysis depends on D47, which acts as the Nucleophile. The substrate site is built by Y75, Y178, and L199.

This sequence belongs to the pseudouridine synthase TruB family. Type 1 subfamily.

It catalyses the reaction uridine(55) in tRNA = pseudouridine(55) in tRNA. Functionally, responsible for synthesis of pseudouridine from uracil-55 in the psi GC loop of transfer RNAs. The polypeptide is tRNA pseudouridine synthase B (Photorhabdus laumondii subsp. laumondii (strain DSM 15139 / CIP 105565 / TT01) (Photorhabdus luminescens subsp. laumondii)).